The following is a 159-amino-acid chain: NADH-quinone oxidoreductase subunit I (159 aa).

4Fe-4S ferredoxin-type domains lie at 51–80 (RRYENGEERCIACKLCEAICPAQAIVIEAD) and 90–119 (TRYDIDMTKCIYCGLCQEACPVDAIVEGPN). The [4Fe-4S] cluster site is built by C60, C63, C66, C70, C99, C102, C105, and C109.

The protein belongs to the complex I 23 kDa subunit family. NDH-1 is composed of 14 different subunits. Subunits NuoA, H, J, K, L, M, N constitute the membrane sector of the complex. Requires [4Fe-4S] cluster as cofactor.

Its subcellular location is the cell inner membrane. The catalysed reaction is a quinone + NADH + 5 H(+)(in) = a quinol + NAD(+) + 4 H(+)(out). Its function is as follows. NDH-1 shuttles electrons from NADH, via FMN and iron-sulfur (Fe-S) centers, to quinones in the respiratory chain. The immediate electron acceptor for the enzyme in this species is believed to be ubiquinone. Couples the redox reaction to proton translocation (for every two electrons transferred, four hydrogen ions are translocated across the cytoplasmic membrane), and thus conserves the redox energy in a proton gradient. The sequence is that of NADH-quinone oxidoreductase subunit I from Rickettsia bellii (strain OSU 85-389).